Here is a 234-residue protein sequence, read N- to C-terminus: Protein rgg8 (234 aa).

It is found in the cytoplasm. It localises to the nucleus. The polypeptide is Protein rgg8 (rgg8) (Schizosaccharomyces pombe (strain 972 / ATCC 24843) (Fission yeast)).